A 270-amino-acid polypeptide reads, in one-letter code: Meiotic recombination 1 protein (270 aa).

In terms of domain architecture, KH spans 191 to 225 (EIKLNKTQITFLIGAKGTRIESLREKSGASIKIIP).

Functionally, required for chromosome pairing and genetic recombination. MER1 may function to bring the axial elements of the synaptonemal complex corresponding to homologous chromosomes together by initiating recombination. MER1 might be responsible for regulating the MER2 gene and/or gene product. This is Meiotic recombination 1 protein (MER1) from Saccharomyces cerevisiae (strain ATCC 204508 / S288c) (Baker's yeast).